The primary structure comprises 631 residues: Mercuric reductase (631 aa).

HMA domains follow at residues 2–66 and 81–145; these read KKYR…YHPG and KKYR…YQPG. A metal cation contacts are provided by C13, C16, C92, and C95. FAD-binding residues include A181, G201, and T206. An intrachain disulfide couples C207 to C212. Residues K216, D472, and V480 each coordinate FAD. Hg(2+) contacts are provided by C628 and C629.

Belongs to the class-I pyridine nucleotide-disulfide oxidoreductase family. As to quaternary structure, homodimer. The cofactor is FAD.

The enzyme catalyses Hg + NADP(+) + H(+) = Hg(2+) + NADPH. Its function is as follows. Resistance to Hg(2+) in bacteria appears to be governed by a specialized system which includes mercuric reductase. MerA protein is responsible for volatilizing mercury as Hg(0). This chain is Mercuric reductase (merA), found in Bacillus cereus.